Reading from the N-terminus, the 3133-residue chain is Probable polyketide synthase 38 (3133 aa).

A Ketosynthase family 3 (KS3) domain is found at 9–440 (DDDVAVIGIG…GSNVCLILSE (432 aa)). Active-site for beta-ketoacyl synthase activity residues include cysteine 181, histidine 320, and histidine 363. An acyl/malonyl transferase region spans residues 647–680 (GVSADIIIGHSLGEISSAYCSGMIDFQTLCYLTY). The active-site For acyl/malonyl transferase activity is serine 657. The segment at 945–1067 (GPSIHSLGNN…GNFSLSKHNI (123 aa)) is N-terminal hotdog fold. In terms of domain architecture, PKS/mFAS DH spans 945 to 1248 (GPSIHSLGNN…CTIVASNPDS (304 aa)). The active-site Proton acceptor; for dehydratase activity is histidine 979. The C-terminal hotdog fold stretch occupies residues 1083–1248 (NFTCISKQDL…CTIVASNPDS (166 aa)). Aspartate 1155 functions as the Proton donor; for dehydratase activity in the catalytic mechanism. The interval 1370–1408 (NNNNNNNNNNNNNNNNNNNNNNNNNNNNNNNNNDNDNDN) is disordered. One can recognise a Carrier domain in the interval 2562–2639 (NNNEIIRSTI…QSIEIIKSAH (78 aa)). At serine 2599 the chain carries O-(pantetheine 4'-phosphoryl)serine. A coiled-coil region spans residues 2649–2711 (NNNNSNHHDN…NNNNNNNNNN (63 aa)). 2 disordered regions span residues 2691–2715 (LNNN…NNNN) and 2794–2817 (GNIS…NNNQ). 2 stretches are compositionally biased toward low complexity: residues 2692–2715 (NNNN…NNNN) and 2795–2817 (NISN…NNNQ).

Pantetheine 4'-phosphate is required as a cofactor.

Probable polyketide synthase. In Dictyostelium discoideum (Social amoeba), this protein is Probable polyketide synthase 38 (pks38).